A 145-amino-acid chain; its full sequence is D-aminoacyl-tRNA deacylase (145 aa).

Residues 137 to 138 (GP) carry the Gly-cisPro motif, important for rejection of L-amino acids motif.

Belongs to the DTD family. As to quaternary structure, homodimer.

It is found in the cytoplasm. The catalysed reaction is glycyl-tRNA(Ala) + H2O = tRNA(Ala) + glycine + H(+). It catalyses the reaction a D-aminoacyl-tRNA + H2O = a tRNA + a D-alpha-amino acid + H(+). In terms of biological role, an aminoacyl-tRNA editing enzyme that deacylates mischarged D-aminoacyl-tRNAs. Also deacylates mischarged glycyl-tRNA(Ala), protecting cells against glycine mischarging by AlaRS. Acts via tRNA-based rather than protein-based catalysis; rejects L-amino acids rather than detecting D-amino acids in the active site. By recycling D-aminoacyl-tRNA to D-amino acids and free tRNA molecules, this enzyme counteracts the toxicity associated with the formation of D-aminoacyl-tRNA entities in vivo and helps enforce protein L-homochirality. In Shewanella woodyi (strain ATCC 51908 / MS32), this protein is D-aminoacyl-tRNA deacylase.